The chain runs to 859 residues: Envelope glycoprotein (859 aa).

The propeptide occupies 1 to 6 (MVSIAF). Residues 7-614 (YGGIPGGIST…KDLWSHIGNW (608 aa)) lie on the Extracellular side of the membrane. Asn-40, Asn-112, Asn-141, Asn-148, Asn-186, Asn-214, Asn-233, Asn-244, Asn-340, Asn-368, Asn-399, Asn-406, Asn-411, and Asn-422 each carry an N-linked (GlcNAc...) asparagine; by host glycan. The tract at residues 446-466 (FGISAIVAAIVAATAIAASAT) is fusion peptide. N-linked (GlcNAc...) asparagine; by host glycans are attached at residues Asn-483 and Asn-490. The segment at 498–513 (LIERQIKILYAMILQT) is immunosuppression. 2 N-linked (GlcNAc...) asparagine; by host glycosylation sites follow: Asn-550 and Asn-557. Coiled-coil stretches lie at residues 576 to 624 (ILTT…SIIK) and 663 to 699 (KKFHHKHASREDTWDQAQHSIHLAGVTGGSGDKYYKQ). The helical transmembrane segment at 615–635 (IPGLGASIIKYIVMFLLIYLL) threads the bilayer. The Cytoplasmic portion of the chain corresponds to 636–859 (LTSSPKILRA…TSHVSMPQYV (224 aa)). Residues 745–764 (AAINEHKNGSGGNNPHQGSL) are disordered.

As to quaternary structure, the mature envelope protein (Env) consists of a trimer of SU-TM heterodimers attached by noncovalent interactions or by a labile interchain disulfide bond. Specific enzymatic cleavages in vivo yield mature proteins. Envelope glycoproteins are synthesized as an inactive precursor that is N-glycosylated and processed likely by host cell furin or by a furin-like protease in the Golgi to yield the mature SU and TM proteins. The cleavage site between SU and TM requires the minimal sequence [KR]-X-[KR]-R.

The protein resides in the virion membrane. It is found in the host cell membrane. The surface protein (SU) attaches the virus to the host cell by binding to its receptor. This interaction triggers the refolding of the transmembrane protein (TM) and is thought to activate its fusogenic potential by unmasking its fusion peptide. Fusion occurs at the host cell plasma membrane. Functionally, the transmembrane protein (TM) acts as a class I viral fusion protein. Under the current model, the protein has at least 3 conformational states: pre-fusion native state, pre-hairpin intermediate state, and post-fusion hairpin state. During viral and target cell membrane fusion, the coiled coil regions (heptad repeats) assume a trimer-of-hairpins structure, positioning the fusion peptide in close proximity to the C-terminal region of the ectodomain. The formation of this structure appears to drive apposition and subsequent fusion of viral and target cell membranes. Membranes fusion leads to delivery of the nucleocapsid into the cytoplasm. In Equus asinus (Donkey), this protein is Envelope glycoprotein (env).